Reading from the N-terminus, the 442-residue chain is Coiled-coil domain-containing protein 91 (442 aa).

Positions 1-16 (MDDDDFGGFEAAETFD) are GGA1-binding motif. The disordered stretch occupies residues 1–27 (MDDDDFGGFEAAETFDGEQGGNQAVSP). Phosphoserine is present on residues serine 43 and serine 46. The segment at 48–79 (ELILDHDRSSPSSGHLRSDAVISSPDDTRADS) is disordered. Coiled-coil stretches lie at residues 127–213 (GVHV…ALSI) and 248–409 (CEEL…RLDQ). Residues 211–414 (LSIIVDEYKA…RRLDQVTRQR (204 aa)) are homodimerization.

In terms of assembly, homodimer. Interacts with GGA1, GGA2 and AP1G1.

It is found in the membrane. Its subcellular location is the golgi apparatus. The protein resides in the trans-Golgi network membrane. It localises to the trans-Golgi network. Its function is as follows. Involved in the regulation of membrane traffic through the trans-Golgi network (TGN). Functions in close cooperation with the GGAs in the sorting of hydrolases to lysosomes. In Rattus norvegicus (Rat), this protein is Coiled-coil domain-containing protein 91 (Ccdc91).